Reading from the N-terminus, the 381-residue chain is Bifunctional polyhydroxybutyrate synthase / ABC transporter periplasmic binding protein (381 aa).

The first 22 residues, 1–22 (MSKTFARSSLCALSMTIMTAHA), serve as a signal peptide directing secretion.

It belongs to the bacterial solute-binding protein PotD/PotF family.

It localises to the periplasm. The enzyme catalyses (3R)-3-hydroxybutanoyl-CoA + [(3R)-hydroxybutanoate](n) = [(3R)-hydroxybutanoate](n+1) + CoA. Functionally, catalyzes the formation of short polymers of R-3-hydroxybutyrate (cPHB). Involved in natural transformation. Probably part of the ABC transporter complex YdcSTUV. During natural transformation, may bind dsDNA and convey it to the inner membrane channel formed by YdcV. In Escherichia coli (strain K12), this protein is Bifunctional polyhydroxybutyrate synthase / ABC transporter periplasmic binding protein (ydcS).